The sequence spans 396 residues: Probable sugar efflux transporter (396 aa).

Helical transmembrane passes span 15–35, 50–70, 81–101, 103–123, 136–156, 170–190, 209–229, 246–266, 275–295, 299–319, 333–353, and 364–384; these read VVTLAVAAFIFNTTEFVPVGL, VGIMLTIYAWVVALMSLPFML, LICLFVVFIASHVLSFLSWSF, VLVISRIGVAFAHAIFWSITA, AQALSLIATGTALAMVLGLPL, FFAIGIGALITLLCLIKLLPL, PALMSIYLLTVVVVTAHYTAY, FATALLLLLGGAGIIGSVIFG, ALVSTAIALLLVCLALLLPAA, IHLGVLSIFWGIAMMIIGLGM, VAMALFSGIFNIGIGAGALVG, and MIGYVGAVPAFAALIWSIIIF.

Belongs to the major facilitator superfamily. SotB (TC 2.A.1.2) family.

Its subcellular location is the cell inner membrane. In terms of biological role, involved in the efflux of sugars. The physiological role may be the reduction of the intracellular concentration of toxic sugars or sugar metabolites. This Escherichia coli O139:H28 (strain E24377A / ETEC) protein is Probable sugar efflux transporter.